A 435-amino-acid chain; its full sequence is Amino acid transporter AVT6C (435 aa).

Residues 1-24 are disordered; that stretch reads MTPQIKTHLLPKQEPSSSENHGSS. A run of 11 helical transmembrane segments spans residues 28-48, 53-73, 100-120, 148-168, 181-201, 219-239, 260-280, 307-327, 354-374, 375-395, and 408-428; these read IVFN…PAAF, IVPA…SVGF, IAVQ…FSII, WNTR…PLVL, VSFL…ISAL, GSFW…TFHF, ISVI…YLLF, IVRL…NFSL, LALL…WYFF, QFMG…AIVL, and IVAA…ISTN.

It belongs to the amino acid/polyamine transporter 2 family. Amino acid/auxin permease (AAAP) (TC 2.A.18.6) subfamily.

Its subcellular location is the membrane. This chain is Amino acid transporter AVT6C, found in Arabidopsis thaliana (Mouse-ear cress).